The following is a 339-amino-acid chain: MAMQVQFEASTDTSAEEESFGPEPISRLEQCGINANDVKKLEEAGYHTVESVAHAPKKELLNIKGISEAKADKILAEAAKLVPMGFTTATEFHQRRSEIIQITTGSKELDKLLQGGIETGSITELFGEFRTGKTQLCHTLAVTCQLPIDRGGGEGKAMYIDTEGTFRPERLLAVAERYGLSGSDVLDNVAYARGFNTDHQTQLLYQASAMMAESRYALLIVDSATALYRTDYSGRGELSARQMHLARFLRMLLRLADEFGVAVVITNQVVAQVDGAAMFAADPKKPIGGNIIAHASTTRLYLRKGRGETRICKIYDSPCLPEAEAMFAINADGVGDAKE.

The disordered stretch occupies residues 1–23 (MAMQVQFEASTDTSAEEESFGPE). The region spanning 48–77 (TVESVAHAPKKELLNIKGISEAKADKILAE) is the HhH domain. 127-134 (GEFRTGKT) is an ATP binding site.

It belongs to the RecA family. RAD51 subfamily. Forms linear homooligomers, giving rise to a RAD51 nucleoprotein filament, which is essential for strand-pairing reactions during DNA recombination. As to expression, expressed at high levels in lymphoid and reproductive organs.

The protein localises to the nucleus. It localises to the cytoplasm. It is found in the chromosome. Plays an important role in homologous strand exchange, a key step in DNA repair through homologous recombination (HR). Binds to single-stranded DNA in an ATP-dependent manner to form nucleoprotein filaments which are essential for the homology search and strand exchange. Catalyzes the recognition of homology and strand exchange between homologous DNA partners to form a joint molecule between a processed DNA break and the repair template. Recruited to resolve stalled replication forks during replication stress. Also involved in interstrand cross-link repair. This is DNA repair protein RAD51 homolog 1 (RAD51A) from Gallus gallus (Chicken).